A 295-amino-acid chain; its full sequence is CBY1-interacting BAR domain-containing protein 1 (295 aa).

The transit peptide at 1–49 (MMSRTPDARARDTQTKQIQENITSVEKHFGDLCQLFAAYVRKTARLRDK) directs the protein to the mitochondrion. Positions 12 to 222 (DTQTKQIQEN…NVDEEGDLEV (211 aa)) are BAR-like. A coiled-coil region spans residues 111–185 (KREDLKQTQS…KQKIRDIKKV (75 aa)). Over residues 243–265 (SKLSLNRTGTSMSKSGTMQSRTS) the composition is skewed to polar residues. The segment at 243–295 (SKLSLNRTGTSMSKSGTMQSRTSSRQRKRDDEEDEEEDDEDEDDLEEVTDDEH) is disordered. Over residues 273-295 (DEEDEEEDDEDEDDLEEVTDDEH) the composition is skewed to acidic residues.

The protein belongs to the CIBAR family.

It is found in the cytoplasm. The protein localises to the cytoskeleton. The protein resides in the microtubule organizing center. Its subcellular location is the centrosome. It localises to the centriole. It is found in the cell projection. The protein localises to the cilium. The protein resides in the nucleus. Its subcellular location is the mitochondrion inner membrane. It localises to the flagellum. Plays a critical role in regulating mitochondrial ultrastructure and function by maintaining the integrity of mitochondrial morphology, particularly the organization of cristae. Plays a crucial role in ciliogenesis. Plays a key role in the correct positioning of the annulus, a septin-based ring structure in the sperm flagellum, serving both as a physical barrier and a membrane diffusion barrier that separates the midpiece (MP) from the principal piece (PP). This Danio rerio (Zebrafish) protein is CBY1-interacting BAR domain-containing protein 1 (cibar1).